Consider the following 56-residue polypeptide: UPF0391 membrane protein Bd1438 (56 aa).

2 helical membrane passes run A4–A24 and I33–G53.

The protein belongs to the UPF0391 family.

It localises to the cell membrane. In Bdellovibrio bacteriovorus (strain ATCC 15356 / DSM 50701 / NCIMB 9529 / HD100), this protein is UPF0391 membrane protein Bd1438.